Reading from the N-terminus, the 408-residue chain is Imidazolonepropionase (408 aa).

The Fe(3+) site is built by His-73 and His-75. Residues His-73 and His-75 each contribute to the Zn(2+) site. 3 residues coordinate 4-imidazolone-5-propanoate: Arg-82, Tyr-145, and His-178. An N-formimidoyl-L-glutamate-binding site is contributed by Tyr-145. His-243 contributes to the Fe(3+) binding site. Position 243 (His-243) interacts with Zn(2+). Residue Gln-246 participates in 4-imidazolone-5-propanoate binding. Asp-318 is a Fe(3+) binding site. Zn(2+) is bound at residue Asp-318. N-formimidoyl-L-glutamate is bound by residues Asn-320 and Gly-322. Residue Ser-323 participates in 4-imidazolone-5-propanoate binding.

This sequence belongs to the metallo-dependent hydrolases superfamily. HutI family. Zn(2+) serves as cofactor. Fe(3+) is required as a cofactor.

Its subcellular location is the cytoplasm. The enzyme catalyses 4-imidazolone-5-propanoate + H2O = N-formimidoyl-L-glutamate. Its pathway is amino-acid degradation; L-histidine degradation into L-glutamate; N-formimidoyl-L-glutamate from L-histidine: step 3/3. Catalyzes the hydrolytic cleavage of the carbon-nitrogen bond in imidazolone-5-propanoate to yield N-formimidoyl-L-glutamate. It is the third step in the universal histidine degradation pathway. The protein is Imidazolonepropionase of Shewanella sp. (strain MR-4).